The chain runs to 399 residues: MKRTHLFIVGIYFLSSCRAEEGLNFPTYDGKDRVVSLSEKNFKQVLKKYDLLCLYYHEPVSSDKVTQKQFQLKEIVLELVAQVLEHKAIGFVMVDAKKEAKLAKKLGFDEEGSLYILKGDRTIEFDGEFAADVLVEFLLDLIEDPVEIISSKLEVQAFERIEDYIKLIGFFKSEDSEYYKAFEEAAEHFQPYIKFFATFDKGVAKKLSLKMNEVDFYEPFMDEPIAIPNKPYTEEELVEFVKEHQRPTLRRLRPEEMFETWEDDLNGIHIVAFAEKSDPDGYEFLEILKQVARDNTDNPDLSILWIDPDDFPLLVAYWEKTFKIDLFRPQIGVVNVTDADSVWMEIPDDDDLPTAEELEDWIEDVLSGKINTEDDDEDDDDDDNSDEEDNDDSDDDDDE.

An N-terminal signal peptide occupies residues 1–19 (MKRTHLFIVGIYFLSSCRA). Tyrosine 282 carries the post-translational modification Phosphotyrosine. A glycan (N-linked (GlcNAc...) asparagine) is linked at asparagine 335. The disordered stretch occupies residues 365-399 (VLSGKINTEDDDEDDDDDDNSDEEDNDDSDDDDDE). Residues 373–399 (EDDDEDDDDDDNSDEEDNDDSDDDDDE) show a composition bias toward acidic residues. Phosphoserine occurs at positions 385 and 393.

It belongs to the calsequestrin family. In terms of assembly, monomer, homodimer and homooligomer. Mostly monomeric in the absence of calcium. Forms higher oligomers in a calcium-dependent manner. Dimers associate to form tetramers, that then form linear homomer chains. Interacts with ASPH and TRDN. In terms of processing, phosphorylation in the C-terminus, probably by CK2, moderately increases calcium buffering capacity. N-glycosylated.

The protein localises to the sarcoplasmic reticulum lumen. Calsequestrin is a high-capacity, moderate affinity, calcium-binding protein and thus acts as an internal calcium store in muscle. Calcium ions are bound by clusters of acidic residues at the protein surface, especially at the interface between subunits. Can bind around 60 Ca(2+) ions. Regulates the release of lumenal Ca(2+) via the calcium release channel RYR2; this plays an important role in triggering muscle contraction. Plays a role in excitation-contraction coupling in the heart and in regulating the rate of heart beats. The protein is Calsequestrin-2 (CASQ2) of Homo sapiens (Human).